A 355-amino-acid chain; its full sequence is MRFDLEPPSHASAAHRVAVLLVNLGTPDEPTPRAVRRYLAQFLSDPRVVEIPQLVWQVILRTLILPLRGRASAKKYAAVWLPEGSPLRVYTERQVESLKPLFAANGYRVIVDYAMRYGTPSIADVLAQLKRAGAERVLLLPMYPQYSASTTATAFDAAFAALGRMRNQPEVRTVRHYADHPAYIHALAEQVRQYWAAHGRPAFDSGDKLVLSFHGVPKRTLDLGDPYHDQCQQTAALLMSALGLTTFECRVTFQSRFGKAEWLQPYTAPTLKELGAAGVRRADVFCPGFTADCLETIEEIGMEVRDEFLHGGGKEFHRIPCLNASHAWIAALGEIAAENLQGWPVRVATAPEAVT.

Fe cation contacts are provided by His214 and Glu295.

Belongs to the ferrochelatase family.

The protein resides in the cytoplasm. The catalysed reaction is heme b + 2 H(+) = protoporphyrin IX + Fe(2+). It functions in the pathway porphyrin-containing compound metabolism; protoheme biosynthesis; protoheme from protoporphyrin-IX: step 1/1. Catalyzes the ferrous insertion into protoporphyrin IX. The sequence is that of Ferrochelatase from Burkholderia thailandensis (strain ATCC 700388 / DSM 13276 / CCUG 48851 / CIP 106301 / E264).